We begin with the raw amino-acid sequence, 140 residues long: Nucleoside diphosphate kinase (140 aa).

Residues Lys11, Phe59, Arg87, Thr93, Arg104, and Asn114 each contribute to the ATP site. Residue His117 is the Pros-phosphohistidine intermediate of the active site.

Belongs to the NDK family. Homotetramer. Mg(2+) is required as a cofactor.

Its subcellular location is the cytoplasm. It carries out the reaction a 2'-deoxyribonucleoside 5'-diphosphate + ATP = a 2'-deoxyribonucleoside 5'-triphosphate + ADP. The catalysed reaction is a ribonucleoside 5'-diphosphate + ATP = a ribonucleoside 5'-triphosphate + ADP. Its function is as follows. Major role in the synthesis of nucleoside triphosphates other than ATP. The ATP gamma phosphate is transferred to the NDP beta phosphate via a ping-pong mechanism, using a phosphorylated active-site intermediate. In Gluconacetobacter diazotrophicus (strain ATCC 49037 / DSM 5601 / CCUG 37298 / CIP 103539 / LMG 7603 / PAl5), this protein is Nucleoside diphosphate kinase.